Here is a 962-residue protein sequence, read N- to C-terminus: Translation initiation factor IF-2 (962 aa).

The tract at residues Ala-101–Pro-366 is disordered. Over residues Asp-117–Lys-141 the composition is skewed to basic and acidic residues. Low complexity predominate over residues Ala-145–Lys-157. Over residues Lys-173–Lys-216 the composition is skewed to basic and acidic residues. Low complexity predominate over residues Lys-219–Glu-234. Over residues Gln-235–Met-269 the composition is skewed to basic and acidic residues. A compositionally biased stretch (low complexity) spans Lys-270–Ala-283. Residues Gly-338–Arg-354 are compositionally biased toward basic and acidic residues. The tr-type G domain maps to Pro-462 to Thr-631. Residues Gly-471 to Thr-478 are G1. Gly-471–Thr-478 contacts GTP. The interval Gly-496–His-500 is G2. The segment at Asp-517–Gly-520 is G3. GTP-binding positions include Asp-517–His-521 and Asn-571–Asp-574. The G4 stretch occupies residues Asn-571 to Asp-574. The interval Ser-607–Lys-609 is G5.

It belongs to the TRAFAC class translation factor GTPase superfamily. Classic translation factor GTPase family. IF-2 subfamily.

It localises to the cytoplasm. One of the essential components for the initiation of protein synthesis. Protects formylmethionyl-tRNA from spontaneous hydrolysis and promotes its binding to the 30S ribosomal subunits. Also involved in the hydrolysis of GTP during the formation of the 70S ribosomal complex. This is Translation initiation factor IF-2 from Neisseria meningitidis serogroup A / serotype 4A (strain DSM 15465 / Z2491).